We begin with the raw amino-acid sequence, 374 residues long: uncharacterized protein (374 aa).

Residues 1–23 (MDSKWFFIVLISFLLVLPSIVTP) form the signal peptide. Residues 66 to 374 (SSSSSSSSSS…SSSSSSSGEN (309 aa)) form a disordered region.

Its subcellular location is the secreted. This is an uncharacterized protein from Dictyostelium discoideum (Social amoeba).